The following is a 393-amino-acid chain: MEMTRGICILGATGSIGKSTLDVVSRHPDQFRIVALTGNHRVAEMQLLCQQHHPELVVMAAPEAAQQLRVGLGDAGLKKIQVESGPEALAEAARMSGVDEVMAAIVGAAGLLPTLAAVEAGKKVYLANKECLVMAGNLFMERVRQHQVTLLPIDSEHNAVFQCFADGKGVRRILLTASGGPFRTWPAEHLAVVTPDQACAHPNWVMGRKISVDSATMMNKGLEVIEAHWLFDLPASRIDVMIHPQSIIHSMVEYVDGSVLAQLGNPDMRTPIAHALAFPERMESGVSSLDLAHGPDLQFEAPDLQRFPCLALAFDALQAGGAAATVLNAANEIAVQAFLEGHLPFLRIAAVVEDTLGELQPAAPDHLDDVLAIDQLAREVALRHLARHGSGMQ.

NADPH is bound by residues T13, G14, S15, I16, and N128. K129 is a binding site for 1-deoxy-D-xylulose 5-phosphate. NADPH is bound at residue E130. D154 contributes to the Mn(2+) binding site. Residues S155, E156, S178, and H201 each coordinate 1-deoxy-D-xylulose 5-phosphate. E156 lines the Mn(2+) pocket. NADPH is bound at residue G207. Positions 214, 219, 220, and 223 each coordinate 1-deoxy-D-xylulose 5-phosphate. Mn(2+) is bound at residue E223.

This sequence belongs to the DXR family. Mg(2+) serves as cofactor. Requires Mn(2+) as cofactor.

The catalysed reaction is 2-C-methyl-D-erythritol 4-phosphate + NADP(+) = 1-deoxy-D-xylulose 5-phosphate + NADPH + H(+). Its pathway is isoprenoid biosynthesis; isopentenyl diphosphate biosynthesis via DXP pathway; isopentenyl diphosphate from 1-deoxy-D-xylulose 5-phosphate: step 1/6. Its function is as follows. Catalyzes the NADPH-dependent rearrangement and reduction of 1-deoxy-D-xylulose-5-phosphate (DXP) to 2-C-methyl-D-erythritol 4-phosphate (MEP). This Acidithiobacillus ferrooxidans (strain ATCC 23270 / DSM 14882 / CIP 104768 / NCIMB 8455) (Ferrobacillus ferrooxidans (strain ATCC 23270)) protein is 1-deoxy-D-xylulose 5-phosphate reductoisomerase.